Reading from the N-terminus, the 299-residue chain is Pyridoxal 5'-phosphate synthase subunit PdxS (299 aa).

Asp29 contacts D-ribose 5-phosphate. Lys86 functions as the Schiff-base intermediate with D-ribose 5-phosphate in the catalytic mechanism. Gly158 is a D-ribose 5-phosphate binding site. Arg170 serves as a coordination point for D-glyceraldehyde 3-phosphate. D-ribose 5-phosphate-binding positions include Gly219 and 240 to 241; that span reads GS.

It belongs to the PdxS/SNZ family. In the presence of PdxT, forms a dodecamer of heterodimers.

The catalysed reaction is aldehydo-D-ribose 5-phosphate + D-glyceraldehyde 3-phosphate + L-glutamine = pyridoxal 5'-phosphate + L-glutamate + phosphate + 3 H2O + H(+). Its pathway is cofactor biosynthesis; pyridoxal 5'-phosphate biosynthesis. Functionally, catalyzes the formation of pyridoxal 5'-phosphate from ribose 5-phosphate (RBP), glyceraldehyde 3-phosphate (G3P) and ammonia. The ammonia is provided by the PdxT subunit. Can also use ribulose 5-phosphate and dihydroxyacetone phosphate as substrates, resulting from enzyme-catalyzed isomerization of RBP and G3P, respectively. The chain is Pyridoxal 5'-phosphate synthase subunit PdxS from Mycobacterium bovis (strain ATCC BAA-935 / AF2122/97).